We begin with the raw amino-acid sequence, 301 residues long: Homoserine O-acetyltransferase (301 aa).

Residue cysteine 142 is the Acyl-thioester intermediate of the active site. Positions 163 and 192 each coordinate substrate. Residue histidine 235 is the Proton acceptor of the active site. Glutamate 237 is a catalytic residue. Substrate is bound at residue arginine 249.

Belongs to the MetA family.

It localises to the cytoplasm. The catalysed reaction is L-homoserine + acetyl-CoA = O-acetyl-L-homoserine + CoA. It participates in amino-acid biosynthesis; L-methionine biosynthesis via de novo pathway; O-acetyl-L-homoserine from L-homoserine: step 1/1. Transfers an acetyl group from acetyl-CoA to L-homoserine, forming acetyl-L-homoserine. This is Homoserine O-acetyltransferase from Bacillus cereus (strain ZK / E33L).